An 810-amino-acid chain; its full sequence is Phenylalanine--tRNA ligase beta subunit (810 aa).

Positions 39 to 150 (RTWANGVVVG…ENLPLGSDVR (112 aa)) constitute a tRNA-binding domain. One can recognise a B5 domain in the interval 411 to 495 (TWSRSIFLRL…RLYGYDNFCD (85 aa)). Mg(2+)-binding residues include aspartate 473, aspartate 479, glutamate 482, and glutamate 483. In terms of domain architecture, FDX-ACB spans 716 to 809 (STYPASDRDI…LVEKFGVNLR (94 aa)).

This sequence belongs to the phenylalanyl-tRNA synthetase beta subunit family. Type 1 subfamily. As to quaternary structure, tetramer of two alpha and two beta subunits. It depends on Mg(2+) as a cofactor.

The protein localises to the cytoplasm. The catalysed reaction is tRNA(Phe) + L-phenylalanine + ATP = L-phenylalanyl-tRNA(Phe) + AMP + diphosphate + H(+). The polypeptide is Phenylalanine--tRNA ligase beta subunit (Trichormus variabilis (strain ATCC 29413 / PCC 7937) (Anabaena variabilis)).